A 434-amino-acid chain; its full sequence is Chaperone SurA (434 aa).

Residues 1–22 (MKPSKHLIFALFALAISQPTMA) form the signal peptide. 2 PpiC domains span residues 173–274 (DVEY…KIMD) and 283–383 (IEEV…QLEE).

It localises to the periplasm. The enzyme catalyses [protein]-peptidylproline (omega=180) = [protein]-peptidylproline (omega=0). Chaperone involved in the correct folding and assembly of outer membrane proteins. Recognizes specific patterns of aromatic residues and the orientation of their side chains, which are found more frequently in integral outer membrane proteins. May act in both early periplasmic and late outer membrane-associated steps of protein maturation. The sequence is that of Chaperone SurA from Shewanella sp. (strain MR-7).